A 347-amino-acid chain; its full sequence is Mitochondrial genome maintenance exonuclease 1 (347 aa).

Catalysis depends on residues D246, D259, and K261.

Belongs to the MGME1 family.

It localises to the mitochondrion. Single-stranded DNA (ssDNA) metal-dependent exonuclease involved in mitochondrial genome maintenance. Has preference for 5'-3' exonuclease activity. Necessary for maintenance of proper 7S DNA levels. Probably involved in mitochondrial DNA (mtDNA) repair. Specifically binds 5-hydroxymethylcytosine (5hmC)-containing DNA in stem cells. The polypeptide is Mitochondrial genome maintenance exonuclease 1 (mgme1) (Xenopus tropicalis (Western clawed frog)).